Reading from the N-terminus, the 520-residue chain is Protein nucleotidyltransferase YdiU (520 aa).

Positions 108, 110, 111, 130, 142, 143, 193, and 200 each coordinate ATP. Asp-269 functions as the Proton acceptor in the catalytic mechanism. Residues Asn-270 and Asp-279 each coordinate Mg(2+). Asp-279 serves as a coordination point for ATP.

Belongs to the SELO family. Mg(2+) is required as a cofactor. It depends on Mn(2+) as a cofactor.

The enzyme catalyses L-seryl-[protein] + ATP = 3-O-(5'-adenylyl)-L-seryl-[protein] + diphosphate. It catalyses the reaction L-threonyl-[protein] + ATP = 3-O-(5'-adenylyl)-L-threonyl-[protein] + diphosphate. It carries out the reaction L-tyrosyl-[protein] + ATP = O-(5'-adenylyl)-L-tyrosyl-[protein] + diphosphate. The catalysed reaction is L-histidyl-[protein] + UTP = N(tele)-(5'-uridylyl)-L-histidyl-[protein] + diphosphate. The enzyme catalyses L-seryl-[protein] + UTP = O-(5'-uridylyl)-L-seryl-[protein] + diphosphate. It catalyses the reaction L-tyrosyl-[protein] + UTP = O-(5'-uridylyl)-L-tyrosyl-[protein] + diphosphate. Functionally, nucleotidyltransferase involved in the post-translational modification of proteins. It can catalyze the addition of adenosine monophosphate (AMP) or uridine monophosphate (UMP) to a protein, resulting in modifications known as AMPylation and UMPylation. This Cupriavidus pinatubonensis (strain JMP 134 / LMG 1197) (Cupriavidus necator (strain JMP 134)) protein is Protein nucleotidyltransferase YdiU.